The sequence spans 514 residues: Antiseptic resistance protein (514 aa).

The Cytoplasmic portion of the chain corresponds to 1–23 (MISFFTKTTDMMTSKKRWTALVV). A helical transmembrane segment spans residues 24–41 (LAVSLFVVTMDMTILIMA). Over 42–57 (LPELVRELEPSGTQQL) the chain is Extracellular. Residues 58-75 (WIVDIYSLVLAGFIIPLS) form a helical membrane-spanning segment. Residues 76–86 (AFADKWGRKKA) are Cytoplasmic-facing. A helical membrane pass occupies residues 87–104 (LLTGFALFGLVSLAIFFA). The Extracellular portion of the chain corresponds to 105–112 (ESAEFVIA). The chain crosses the membrane as a helical span at residues 113–130 (IRFLLGIAGALIMPTTLS). The Cytoplasmic segment spans residues 131-146 (MIRVIFENPKERATAL). Residues 147 to 164 (AVWSIASSIGAVFGPIIG) traverse the membrane as a helical segment. Topologically, residues 165–172 (GALLEQFS) are extracellular. A helical transmembrane segment spans residues 173 to 190 (WHSAFLINVPFAIIAVVA). Topologically, residues 191-207 (GLFLLPESKLSKEKSHS) are cytoplasmic. A helical membrane pass occupies residues 208 to 225 (WDIPSTILSIAGMIGLVW). The Extracellular segment spans residues 226 to 237 (SIKEFSKEGLAD). A helical transmembrane segment spans residues 238–255 (IIPWVVIVLAITMIVIFV). Residues 256–278 (KRNLSSSDPMLDVRLFKKRSFSA) are Cytoplasmic-facing. Residues 279–295 (GTIAAFMTMFAMASVLL) form a helical membrane-spanning segment. At 296 to 315 (LASQWLQVVEELSPFKAGLY) the chain is on the extracellular side. A helical transmembrane segment spans residues 316–333 (LLPMAIGDMVFAPIAPGL). Over 334–341 (AARFGPKI) the chain is Cytoplasmic. A helical membrane pass occupies residues 342 to 360 (VLPSGIGIAAIGMFIMYFF). Residues 361–369 (GHPLSYSTM) lie on the Extracellular side of the membrane. The chain crosses the membrane as a helical span at residues 370-387 (ALALILVGAGMASLAVAS). Over 388 to 408 (ALIMLETPTSKAGNAAAVEES) the chain is Cytoplasmic. The chain crosses the membrane as a helical span at residues 409-426 (MYDLGNVFGVAVLGSLSS). At 427-481 (MLYRVFLDISSFSSKGIVGDLAHVAEESVVGAVEVAKATGIKQLANEAVTSFNDA) the chain is on the extracellular side. Residues 482–499 (FVATALVGGIIMIIISIV) form a helical membrane-spanning segment. Residues 500 to 514 (VYLLIPKSLDITKQK) lie on the Cytoplasmic side of the membrane.

It belongs to the major facilitator superfamily.

The protein localises to the cell membrane. Functionally, confers export-mediated resistance against antiseptic and disinfectant compounds such as intercalating dyes, quaternary ammonium salts and diamidines. The sequence is that of Antiseptic resistance protein (qacA) from Staphylococcus aureus (strain Mu50 / ATCC 700699).